The sequence spans 256 residues: Ribosomal RNA small subunit methyltransferase J (256 aa).

S-adenosyl-L-methionine contacts are provided by residues Arg104–Asp105, Glu120–Arg121, Ser156–Ser157, and Asp174.

The protein belongs to the methyltransferase superfamily. RsmJ family.

Its subcellular location is the cytoplasm. It catalyses the reaction guanosine(1516) in 16S rRNA + S-adenosyl-L-methionine = N(2)-methylguanosine(1516) in 16S rRNA + S-adenosyl-L-homocysteine + H(+). Its function is as follows. Specifically methylates the guanosine in position 1516 of 16S rRNA. The chain is Ribosomal RNA small subunit methyltransferase J from Yersinia pseudotuberculosis serotype O:3 (strain YPIII).